The chain runs to 257 residues: Phycoerythrobilin:ferredoxin oxidoreductase (257 aa).

Belongs to the HY2 family.

The enzyme catalyses (3Z)-phycoerythrobilin + oxidized 2[4Fe-4S]-[ferredoxin] = 15,16-dihydrobiliverdin + reduced 2[4Fe-4S]-[ferredoxin] + 2 H(+). In terms of biological role, catalyzes the two-electron reduction of the C2 and C3(1) diene system of 15,16-dihydrobiliverdin. The chain is Phycoerythrobilin:ferredoxin oxidoreductase (pebB) from Prochlorococcus marinus (strain SARG / CCMP1375 / SS120).